The sequence spans 1992 residues: Fer-1-like protein 4 (1992 aa).

C2 domains follow at residues Met-1–Glu-97, Pro-214–Ala-330, and Thr-369–Asn-502. Over Met-1 to Trp-1952 the chain is Extracellular. 3 disordered regions span residues Arg-554 to Ile-606, Ala-661 to Gln-686, and Ser-691 to Trp-710. Positions Pro-559–Ser-569 are enriched in polar residues. Over residues Thr-572 to Lys-581 the composition is skewed to basic residues. 2 C2 domains span residues Pro-951 to Phe-1078 and Ile-1126 to Glu-1250. 2 disordered regions span residues Glu-1245 to Thr-1276 and Phe-1322 to Ser-1361. 2 stretches are compositionally biased toward acidic residues: residues Pro-1247–Thr-1257 and Ser-1328–Asp-1337. C2 domains are found at residues Ser-1430–Gly-1549 and Val-1675–Ser-1824. 8 residues coordinate Ca(2+): Asp-1464, Asp-1470, Asp-1519, Asp-1521, Asp-1527, Asp-1795, Ser-1798, and Asp-1801. Positions Glu-1862–Glu-1885 are disordered. Residues Gly-1869–Ala-1878 are compositionally biased toward basic residues. Residues Arg-1953–Leu-1973 traverse the membrane as a helical segment. Over Val-1974–Lys-1992 the chain is Cytoplasmic.

Ca(2+) serves as cofactor.

The protein localises to the membrane. In Mus musculus (Mouse), this protein is Fer-1-like protein 4 (Fer1l4).